Consider the following 90-residue polypeptide: Probable Fe(2+)-trafficking protein (90 aa).

It belongs to the Fe(2+)-trafficking protein family.

Could be a mediator in iron transactions between iron acquisition and iron-requiring processes, such as synthesis and/or repair of Fe-S clusters in biosynthetic enzymes. The chain is Probable Fe(2+)-trafficking protein from Azotobacter vinelandii (strain DJ / ATCC BAA-1303).